Here is a 396-residue protein sequence, read N- to C-terminus: Succinyl-CoA:mesaconate CoA-transferase (396 aa).

Aspartate 175 acts as the Nucleophile in catalysis.

It belongs to the CoA-transferase III family.

It carries out the reaction mesaconate + succinyl-CoA = 2-methylfumaryl-CoA + succinate. Functionally, involved in the methylaspartate cycle. Catalyzes the transfer of the CoA moiety from succinyl-CoA to mesaconate to generate mesaconyl-CoA (2-methylfumaryl-CoA) and succinate. This Haloarcula marismortui (strain ATCC 43049 / DSM 3752 / JCM 8966 / VKM B-1809) (Halobacterium marismortui) protein is Succinyl-CoA:mesaconate CoA-transferase.